We begin with the raw amino-acid sequence, 460 residues long: MLKILIPTLMLFPTIWLSPAKWLWTTSIAQSLIIALASLSWLKWSSETGWSSSNLYLATDPLSTPLLVLTCWLLPLMILASQSHLSPEPLNRQRAYISLLVSLQTFLVLAFGATEIIMFYVMFEATLLPTLIIITRWGNQTERLNAGTYFLFYTLAGSLPLLVALLLMQNDNGTLSMFTLQYTQPLHLLTWGDKLWWAACLLAFLVKMPLYGVHLWLPKAHVEAPIAGSMILAAVLLKLGGYGMMRMMVMLDPLTKELAYPFIVLALWGIIMTGSICLRQTDLKSLIAYSSVGHMGLVAGGILIQTPWGFTGAIILMIAHGLASSALFCLANTSYERTHSRTMLLARGMQMILPLMTTWWFVASLANLALPPLPNLMGELMIITSMFNWSYWTLILTGLGTLITASYSLYLFLMTQRGPLPSHIIALEPTHTREHLLIILHLIPIVLLILKPELMWGWCF.

13 helical membrane-spanning segments follow: residues 20-42, 61-81, 94-113, 117-139, 148-168, 195-215, 225-245, 258-278, 285-304, 308-330, 351-371, 394-414, and 436-456; these read AKWLWTTSIAQSLIIALASLSWL, PLSTPLLVLTCWLLPLMILAS, RAYISLLVSLQTFLVLAFGA, IMFYVMFEATLLPTLIIITRWGN, TYFLFYTLAGSLPLLVALLLM, LWWAACLLAFLVKMPLYGVHL, PIAGSMILAAVLLKLGGYGMM, LAYPFIVLALWGIIMTGSICL, SLIAYSSVGHMGLVAGGILI, WGFTGAIILMIAHGLASSALFCL, MILPLMTTWWFVASLANLALP, LILTGLGTLITASYSLYLFLM, and LLIILHLIPIVLLILKPELMW.

Belongs to the complex I subunit 4 family.

The protein resides in the mitochondrion membrane. The catalysed reaction is a ubiquinone + NADH + 5 H(+)(in) = a ubiquinol + NAD(+) + 4 H(+)(out). Functionally, core subunit of the mitochondrial membrane respiratory chain NADH dehydrogenase (Complex I) that is believed to belong to the minimal assembly required for catalysis. Complex I functions in the transfer of electrons from NADH to the respiratory chain. The immediate electron acceptor for the enzyme is believed to be ubiquinone. The sequence is that of NADH-ubiquinone oxidoreductase chain 4 (MT-ND4) from Oncorhynchus mykiss (Rainbow trout).